The primary structure comprises 242 residues: uncharacterized protein (242 aa).

The span at 57–67 (SPTSQKTSASG) shows a compositional bias: polar residues. Residues 57–78 (SPTSQKTSASGQEEPDPLHDKS) form a disordered region. One can recognise a DUF1279 domain in the interval 76–188 (DKSSGLIQRF…GYMSTPPPVK (113 aa)). A helical membrane pass occupies residues 92–114 (YGKVMIPVHLLTSTMWFGTFYYA). Residues 188-237 (KEYLQEKMEETKERISGKMEETKDRFSERMEETKDKFNEKLQETKDKVSF) adopt a coiled-coil conformation. Positions 198–236 (TKERISGKMEETKDRFSERMEETKDKFNEKLQETKDKVS) are enriched in basic and acidic residues. The disordered stretch occupies residues 198–242 (TKERISGKMEETKDRFSERMEETKDKFNEKLQETKDKVSFRKKKE).

Its subcellular location is the membrane. This is an uncharacterized protein from Danio rerio (Zebrafish).